A 399-amino-acid polypeptide reads, in one-letter code: Stearoyl-[acyl-carrier-protein] 9-desaturase, seed specific, chloroplastic (399 aa).

The N-terminal 34 residues, 1-34 (MALKFNPLVSQPYKLASSARPPVSTFRSPKFLCL), are a transit peptide targeting the chloroplast. Fe cation is bound by residues E141, E179, H182, E232, E265, and H268.

It belongs to the fatty acid desaturase type 2 family. As to quaternary structure, homodimer. The cofactor is Fe(2+). As to expression, developing seeds.

The protein localises to the plastid. It localises to the chloroplast. It catalyses the reaction octadecanoyl-[ACP] + 2 reduced [2Fe-2S]-[ferredoxin] + O2 + 2 H(+) = (9Z)-octadecenoyl-[ACP] + 2 oxidized [2Fe-2S]-[ferredoxin] + 2 H2O. The protein operates within lipid metabolism; fatty acid metabolism. Its function is as follows. Converts stearoyl-ACP to oleoyl-ACP by introduction of a cis double bond between carbons Delta(9) and Delta(10) of the acyl chain. This chain is Stearoyl-[acyl-carrier-protein] 9-desaturase, seed specific, chloroplastic, found in Brassica napus (Rape).